The chain runs to 234 residues: tRNA (guanine-N(1)-)-methyltransferase (234 aa).

S-adenosyl-L-methionine-binding positions include G110 and 134–139; that span reads IGDYVL.

This sequence belongs to the RNA methyltransferase TrmD family. In terms of assembly, homodimer.

It localises to the cytoplasm. It carries out the reaction guanosine(37) in tRNA + S-adenosyl-L-methionine = N(1)-methylguanosine(37) in tRNA + S-adenosyl-L-homocysteine + H(+). In terms of biological role, specifically methylates guanosine-37 in various tRNAs. The chain is tRNA (guanine-N(1)-)-methyltransferase from Tropheryma whipplei (strain TW08/27) (Whipple's bacillus).